The chain runs to 87 residues: Large ribosomal subunit protein bL31B (87 aa).

It belongs to the bacterial ribosomal protein bL31 family. Type B subfamily. As to quaternary structure, part of the 50S ribosomal subunit.

This chain is Large ribosomal subunit protein bL31B, found in Paraburkholderia phymatum (strain DSM 17167 / CIP 108236 / LMG 21445 / STM815) (Burkholderia phymatum).